Here is a 727-residue protein sequence, read N- to C-terminus: Synaptic vesicle glycoprotein 2C (727 aa).

Residues 1 to 57 form an interaction with SYT1 region; that stretch reads MEDSYKDRTSLMKGAKDIAKEVKKQTVKKVNQAVDRAQDEYTQRSYSRFQDEDDDDD. Topologically, residues 1–154 are cytoplasmic; the sequence is MEDSYKDRTS…CGHGRFQWAL (154 aa). The disordered stretch occupies residues 22–120; it reads VKKQTVKKVN…QPKGDEYKDR (99 aa). A phosphoserine mark is found at Ser75 and Ser76. At Thr79 the chain carries Phosphothreonine. A helical transmembrane segment spans residues 155–175; the sequence is FFVLGMALMADGVEVFVVGFV. At 176–191 the chain is on the extracellular side; that stretch reads LPSAETDLCIPNSGSG. A helical membrane pass occupies residues 192–212; that stretch reads WLGSIVYLGMMVGAFFWGGLA. Residues 213–226 are Cytoplasmic-facing; that stretch reads DKVGRKQSLLICMS. A helical transmembrane segment spans residues 227–247; it reads VNGFFAFLSSFVQGYGFFLLC. Position 248 (Arg248) is a topological domain, extracellular. The helical transmembrane segment at 249-269 threads the bilayer; sequence LLSGFGIGGAIPTVFSYFAEV. Residues 270–280 are Cytoplasmic-facing; the sequence is LAREKRGEHLS. The chain crosses the membrane as a helical span at residues 281 to 301; the sequence is WLCMFWMIGGIYASAMAWAII. Over 302-320 the chain is Extracellular; that stretch reads PHYGWSFSMGSAYQFHSWR. The chain crosses the membrane as a helical span at residues 321 to 341; it reads VFVIVCALPCVSSVVALTFMP. Topologically, residues 342-437 are cytoplasmic; it reads ESPRFLLEVG…PVRENTIKLT (96 aa). Residues 438-458 form a helical membrane-spanning segment; that stretch reads IVWFTLSFGYYGLSVWFPDVI. Over 459–578 the chain is Extracellular; it reads KHLQSDEYAL…CQITFDDDYS (120 aa). The residue at position 466 (Tyr466) is a Phosphotyrosine. Asn480, Asn484, Asn534, Asn559, and Asn565 each carry an N-linked (GlcNAc...) asparagine glycan. A (Microbial infection) C.botulinum neurotoxin type A-binding region spans residues 529 to 566; that stretch reads NTYFKNCTFIDTLFENTDFEPYKFIDSEFQNCSFLHNK. Residues 579–599 form a helical membrane-spanning segment; the sequence is AYWIYFVNFLGTLAVLPGNIV. Residues 600 to 609 lie on the Cytoplasmic side of the membrane; sequence SALLMDRIGR. Residues 610-630 form a helical membrane-spanning segment; sequence LTMLGGSMVLSGISCFFLWFG. Topologically, residues 631–636 are extracellular; it reads TSESMM. A helical transmembrane segment spans residues 637–657; sequence IGMLCLYNGLTISAWNSLDVV. Residues 658-670 are Cytoplasmic-facing; that stretch reads TVELYPTDRRATG. A helical transmembrane segment spans residues 671-693; sequence FGFLNALCKAAAVLGNLIFGSLV. Over 694–697 the chain is Extracellular; the sequence is SITK. The helical transmembrane segment at 698–716 threads the bilayer; the sequence is AIPILLASTVLVCGGLVGL. Residues 717–727 are Cytoplasmic-facing; that stretch reads RLPDTRTQVLM.

The protein belongs to the major facilitator superfamily. As to quaternary structure, interacts with SYT1 in a calcium-dependent manner. (Microbial infection) Interacts with C.botulinum neurotoxin type A (BoNT/A, botA). In terms of assembly, (Microbial infection) Interacts with C.botulinum neurotoxin type F (BoNT/F). Interaction requires glycosylation of SV2 proteins. N-glycosylated. As to expression, expressed at high levels in very few brain areas including the striatum, midbrain and hindbrain, and in the olfactory bulb. Expressed at lower levels in cerebrum, hippocampus and cerebellum (at protein level). Mainly expressed in brain; also detected in lung, liver, kidney.

The protein resides in the cytoplasmic vesicle. Its subcellular location is the secretory vesicle. The protein localises to the synaptic vesicle membrane. Plays a role in the control of regulated secretion in neural and endocrine cells, enhancing selectively low-frequency neurotransmission. Positively regulates vesicle fusion by maintaining the readily releasable pool of secretory vesicles. Its function is as follows. (Microbial infection) Receptor for C.botulinum neurotoxin type A (BoNT/A, botA); the toxin binds Sv2c via extracellular loop 4. Restores uptake of BoNT/A in rat cells that are deleted for SV2 receptor. Functionally, (Microbial infection) Possible receptor for C.botulinum neurotoxin type D (BoNT/D, botD); BoNT/D does not bind to extracellular loop 4 as do BoNT/A and BoNT/E. Another group does not find a convincing interaction with SV2. In terms of biological role, (Microbial infection) Receptor for C.botulinum neurotoxin type F (BoNT/F); binding requires glycosylation of Asn-573. The polypeptide is Synaptic vesicle glycoprotein 2C (Sv2c) (Rattus norvegicus (Rat)).